Consider the following 159-residue polypeptide: 2-C-methyl-D-erythritol 2,4-cyclodiphosphate synthase (159 aa).

A divalent metal cation is bound by residues D8 and H10. 4-CDP-2-C-methyl-D-erythritol 2-phosphate-binding positions include D8 to H10 and H34 to S35. H42 lines the a divalent metal cation pocket. Residues D56–G58, F61–D65, F139, and R142 contribute to the 4-CDP-2-C-methyl-D-erythritol 2-phosphate site.

It belongs to the IspF family. In terms of assembly, homotrimer. A divalent metal cation serves as cofactor.

It catalyses the reaction 4-CDP-2-C-methyl-D-erythritol 2-phosphate = 2-C-methyl-D-erythritol 2,4-cyclic diphosphate + CMP. The protein operates within isoprenoid biosynthesis; isopentenyl diphosphate biosynthesis via DXP pathway; isopentenyl diphosphate from 1-deoxy-D-xylulose 5-phosphate: step 4/6. In terms of biological role, involved in the biosynthesis of isopentenyl diphosphate (IPP) and dimethylallyl diphosphate (DMAPP), two major building blocks of isoprenoid compounds. Catalyzes the conversion of 4-diphosphocytidyl-2-C-methyl-D-erythritol 2-phosphate (CDP-ME2P) to 2-C-methyl-D-erythritol 2,4-cyclodiphosphate (ME-CPP) with a corresponding release of cytidine 5-monophosphate (CMP). In Syntrophus aciditrophicus (strain SB), this protein is 2-C-methyl-D-erythritol 2,4-cyclodiphosphate synthase.